A 197-amino-acid polypeptide reads, in one-letter code: Guanylate kinase (197 aa).

Positions 7 to 185 (GLIIILSSPS…TLKKIHEIIV (179 aa)) constitute a Guanylate kinase-like domain. 14 to 21 (SPSGTGKS) serves as a coordination point for ATP.

Belongs to the guanylate kinase family.

The protein resides in the cytoplasm. It catalyses the reaction GMP + ATP = GDP + ADP. Functionally, essential for recycling GMP and indirectly, cGMP. The sequence is that of Guanylate kinase (gmk) from Rickettsia prowazekii (strain Madrid E).